The following is a 216-amino-acid chain: Protein Syd (216 aa).

This sequence belongs to the Syd family.

It is found in the cell inner membrane. Its function is as follows. Interacts with the SecY protein in vivo. May bind preferentially to an uncomplexed state of SecY, thus functioning either as a chelating agent for excess SecY in the cell or as a regulatory factor that negatively controls the translocase function. The polypeptide is Protein Syd (Shewanella baltica (strain OS155 / ATCC BAA-1091)).